The primary structure comprises 356 residues: Neurogenic differentiation factor 1 (356 aa).

Residues M1–A94 form a disordered region. The span at E58–D78 shows a compositional bias: acidic residues. Positions P81 to K93 are enriched in basic residues. A Nuclear localization signal motif is present at residues K87 to K93. The region spanning L101–L153 is the bHLH domain. Phosphoserine is present on residues S162, S259, S266, and S274. Position 335 is a phosphoserine; by CaMK2 (S335).

In terms of assembly, efficient DNA-binding requires dimerization with another bHLH protein. Heterodimer with TCF3/E47; the heterodimer is inhibited in presence of ID2, but not NR0B2, to E-box element. Interacts with EP300; the interaction is inhibited by NR0B2. Interacts with RREB1. Interacts with ATOH8. In terms of processing, phosphorylated. In islet cells, phosphorylated on Ser-274 upon glucose stimulation; which may be required for nuclear localization. In activated neurons, phosphorylated on Ser-335; which promotes dendritic growth. Phosphorylated by MAPK1; phosphorylation regulates heterodimerization and DNA-binding activities. Phosphorylation on Ser-266 and Ser-274 increases transactivation on the insulin promoter in glucose-stimulated insulinoma cells.

The protein localises to the cytoplasm. It is found in the nucleus. Its function is as follows. Acts as a transcriptional activator: mediates transcriptional activation by binding to E box-containing promoter consensus core sequences 5'-CANNTG-3'. Associates with the p300/CBP transcription coactivator complex to stimulate transcription of the secretin gene as well as the gene encoding the cyclin-dependent kinase inhibitor CDKN1A. Contributes to the regulation of several cell differentiation pathways, like those that promote the formation of early retinal ganglion cells, inner ear sensory neurons, granule cells forming either the cerebellum or the dentate gyrus cell layer of the hippocampus, endocrine islet cells of the pancreas and enteroendocrine cells of the small intestine. Together with PAX6 or SIX3, is required for the regulation of amacrine cell fate specification. Also required for dendrite morphogenesis and maintenance in the cerebellar cortex. Associates with chromatin to enhancer regulatory elements in genes encoding key transcriptional regulators of neurogenesis. The polypeptide is Neurogenic differentiation factor 1 (NEUROD1) (Homo sapiens (Human)).